A 155-amino-acid chain; its full sequence is uncharacterized protein (155 aa).

A disordered region spans residues 56-79 (GEKRPTHRRPYRRTKPYPKRPSML). The segment covering 60-73 (PTHRRPYRRTKPYP) has biased composition (basic residues).

This is an uncharacterized protein from Sinorhizobium fredii (strain NBRC 101917 / NGR234).